The following is a 317-amino-acid chain: Ferrochelatase (317 aa).

Histidine 192 and glutamate 271 together coordinate Fe cation.

This sequence belongs to the ferrochelatase family.

It localises to the cytoplasm. The catalysed reaction is heme b + 2 H(+) = protoporphyrin IX + Fe(2+). The protein operates within porphyrin-containing compound metabolism; protoheme biosynthesis; protoheme from protoporphyrin-IX: step 1/1. Its function is as follows. Catalyzes the ferrous insertion into protoporphyrin IX. The chain is Ferrochelatase from Geobacter metallireducens (strain ATCC 53774 / DSM 7210 / GS-15).